Consider the following 99-residue polypeptide: Acylphosphatase-1 (99 aa).

Residues 9 to 99 (SVDYEVFGKV…LEHSTFSICK (91 aa)) enclose the Acylphosphatase-like domain. Active-site residues include Arg-24 and Asn-42.

This sequence belongs to the acylphosphatase family.

It catalyses the reaction an acyl phosphate + H2O = a carboxylate + phosphate + H(+). The protein is Acylphosphatase-1 (acyp1) of Xenopus laevis (African clawed frog).